Consider the following 90-residue polypeptide: Albumin-1 (90 aa).

A signal peptide is located at residue alanine 1. Disulfide bonds link cysteine 4/cysteine 21, cysteine 8/cysteine 23, and cysteine 16/cysteine 34. The propeptide occupies leucine 40–isoleucine 47.

Post-translationally, the C-terminal glycine may be removed from A1b.

Functionally, A1b binds to basic 7S globulin (BG) and stimulates its phosphorylation activity. This Phaseolus angularis (Azuki bean) protein is Albumin-1 (LEG).